The following is a 140-amino-acid chain: Transcription antitermination protein NusB (140 aa).

The protein belongs to the NusB family.

Its function is as follows. Involved in transcription antitermination. Required for transcription of ribosomal RNA (rRNA) genes. Binds specifically to the boxA antiterminator sequence of the ribosomal RNA (rrn) operons. In Elusimicrobium minutum (strain Pei191), this protein is Transcription antitermination protein NusB.